Here is a 441-residue protein sequence, read N- to C-terminus: Putative collagenous domain-containing protein R238 (441 aa).

The 36-residue stretch at glycine 164–proline 199 folds into the Collagen-like domain. The interval isoleucine 171 to glutamate 198 is disordered. A compositionally biased stretch (basic and acidic residues) spans isoleucine 187–glutamate 198.

This chain is Putative collagenous domain-containing protein R238, found in Acanthamoeba polyphaga (Amoeba).